A 943-amino-acid polypeptide reads, in one-letter code: Translation initiation factor IF-2 (943 aa).

The tract at residues 35–359 (MSSIDQDQEA…MPQRKERPLP (325 aa)) is disordered. The segment covering 57 to 76 (KAPSSQAAKTPAKAAKTSSA) has biased composition (low complexity). Basic and acidic residues-rich tracts occupy residues 92–103 (SNDHADAAEHSQ) and 110–124 (AKQE…KTSD). The span at 130 to 141 (SKSTILRPRSTQ) shows a compositional bias: polar residues. The segment covering 142–190 (TAHTNTNHNRGGNTASANNTANGRNSNRSNNNNNNRSANNANRSGNNNR) has biased composition (low complexity). 3 stretches are compositionally biased toward basic and acidic residues: residues 191 to 205 (SNER…RFDN), 239 to 250 (ASERQQPKRQEA), and 259 to 271 (KRSE…RPRT). Low complexity-rich tracts occupy residues 289–299 (PAAAAPKPASA) and 315–330 (NFGR…GFNR). The span at 331-342 (NNRRNKKNKRRQ) shows a compositional bias: basic residues. Positions 346 to 358 (PKKEMPQRKERPL) are enriched in basic and acidic residues. Residues 444–613 (PRPPVVTIMG…LLEADVLELK (170 aa)) form the tr-type G domain. The segment at 453 to 460 (GHVDHGKT) is G1. 453–460 (GHVDHGKT) serves as a coordination point for GTP. The G2 stretch occupies residues 478–482 (GITQH). A G3 region spans residues 499 to 502 (DTPG). GTP-binding positions include 499–503 (DTPGH) and 553–556 (NKID). A G4 region spans residues 553–556 (NKID). The segment at 589 to 591 (SAK) is G5.

Belongs to the TRAFAC class translation factor GTPase superfamily. Classic translation factor GTPase family. IF-2 subfamily.

Its subcellular location is the cytoplasm. Functionally, one of the essential components for the initiation of protein synthesis. Protects formylmethionyl-tRNA from spontaneous hydrolysis and promotes its binding to the 30S ribosomal subunits. Also involved in the hydrolysis of GTP during the formation of the 70S ribosomal complex. In Lacticaseibacillus paracasei (strain ATCC 334 / BCRC 17002 / CCUG 31169 / CIP 107868 / KCTC 3260 / NRRL B-441) (Lactobacillus paracasei), this protein is Translation initiation factor IF-2.